Reading from the N-terminus, the 329-residue chain is Thioredoxin-like fold domain-containing protein MRL7L homolog, chloroplastic (329 aa).

The N-terminal 46 residues, 1-46, are a transit peptide targeting the chloroplast; sequence MALQSCCSSSASVPATCSALCLAEATRAASLFVRPRAAARRLVLAR. Residues 58–91 are disordered; sequence AVQLVLGGRARDDGSESESSDDEDDDEPMQMTDE. A compositionally biased stretch (acidic residues) spans 72–85; sequence SESESSDDEDDDEP.

It is found in the plastid. The protein resides in the chloroplast stroma. In terms of biological role, plays an essential role in early steps of chloroplast development. Involved in the regulation of plastid gene expression. Required for the proper function of the plastid transcriptional machinery and protein accumulation in thylakoid membranes. May function as molecular chaperone to ensure proper organization of the nucleoids in chloroplasts. This is Thioredoxin-like fold domain-containing protein MRL7L homolog, chloroplastic from Oryza sativa subsp. japonica (Rice).